We begin with the raw amino-acid sequence, 389 residues long: Succinate--CoA ligase [ADP-forming] subunit beta (389 aa).

Positions 9-236 constitute an ATP-grasp domain; that stretch reads KELFAKHNVP…KDATDPLELK (228 aa). Residues Lys-45, 52–54, Ser-94, and Glu-99 contribute to the ATP site; that span reads GRG. 2 residues coordinate Mg(2+): Asn-191 and Asp-205. Substrate contacts are provided by residues Asn-256 and 318-320; that span reads GIT.

Belongs to the succinate/malate CoA ligase beta subunit family. As to quaternary structure, heterotetramer of two alpha and two beta subunits. It depends on Mg(2+) as a cofactor.

The catalysed reaction is succinate + ATP + CoA = succinyl-CoA + ADP + phosphate. It catalyses the reaction GTP + succinate + CoA = succinyl-CoA + GDP + phosphate. Its pathway is carbohydrate metabolism; tricarboxylic acid cycle; succinate from succinyl-CoA (ligase route): step 1/1. Its function is as follows. Succinyl-CoA synthetase functions in the citric acid cycle (TCA), coupling the hydrolysis of succinyl-CoA to the synthesis of either ATP or GTP and thus represents the only step of substrate-level phosphorylation in the TCA. The beta subunit provides nucleotide specificity of the enzyme and binds the substrate succinate, while the binding sites for coenzyme A and phosphate are found in the alpha subunit. The sequence is that of Succinate--CoA ligase [ADP-forming] subunit beta from Mycobacteroides abscessus (strain ATCC 19977 / DSM 44196 / CCUG 20993 / CIP 104536 / JCM 13569 / NCTC 13031 / TMC 1543 / L948) (Mycobacterium abscessus).